Reading from the N-terminus, the 149-residue chain is Ribosome maturation factor RimP (149 aa).

This sequence belongs to the RimP family.

It localises to the cytoplasm. Its function is as follows. Required for maturation of 30S ribosomal subunits. This is Ribosome maturation factor RimP from Sulfurimonas denitrificans (strain ATCC 33889 / DSM 1251) (Thiomicrospira denitrificans (strain ATCC 33889 / DSM 1251)).